Reading from the N-terminus, the 313-residue chain is ADP-L-glycero-D-manno-heptose-6-epimerase (313 aa).

NADP(+)-binding positions include 10-11 (MI), 31-32 (DN), lysine 38, arginine 53, 75-79 (EGACS), and asparagine 92. The Proton acceptor role is filled by tyrosine 139. An NADP(+)-binding site is contributed by lysine 143. Substrate is bound at residue asparagine 174. NADP(+) is bound by residues valine 175 and lysine 183. Lysine 183 serves as the catalytic Proton acceptor. Substrate-binding positions include serine 185, histidine 192, 206–209 (FAGS), arginine 214, and tyrosine 277.

It belongs to the NAD(P)-dependent epimerase/dehydratase family. HldD subfamily. Homopentamer. Requires NADP(+) as cofactor.

The catalysed reaction is ADP-D-glycero-beta-D-manno-heptose = ADP-L-glycero-beta-D-manno-heptose. The protein operates within nucleotide-sugar biosynthesis; ADP-L-glycero-beta-D-manno-heptose biosynthesis; ADP-L-glycero-beta-D-manno-heptose from D-glycero-beta-D-manno-heptose 7-phosphate: step 4/4. Its pathway is bacterial outer membrane biogenesis; LPS core biosynthesis. In terms of biological role, catalyzes the interconversion between ADP-D-glycero-beta-D-manno-heptose and ADP-L-glycero-beta-D-manno-heptose via an epimerization at carbon 6 of the heptose. This chain is ADP-L-glycero-D-manno-heptose-6-epimerase, found in Vibrio vulnificus (strain CMCP6).